The chain runs to 910 residues: Staphylococcal nuclease domain-containing protein 1 (910 aa).

Alanine 2 is modified (N-acetylalanine). 3 TNase-like domains span residues 18-166 (TVQR…MWSE), 193-328 (KPVN…IWRD), and 341-496 (KQFV…LHSK). Position 103 is a phosphothreonine (threonine 103). Lysine 193 carries the N6-acetyllysine modification. Residue threonine 240 is modified to Phosphothreonine. Short sequence motifs (nuclear localization signal) lie at residues 321-325 (RRLRI) and 388-392 (KKLRP). Phosphoserine is present on serine 426. A Glycyl lysine isopeptide (Lys-Gly) (interchain with G-Cter in SUMO2) cross-link involves residue lysine 513. Residues 525-660 (GRSEAVVEYV…KQKKEKVWAH (136 aa)) form the TNase-like 4 domain. The residue at position 641 (lysine 641) is an N6-acetyllysine. A Phosphoserine modification is found at serine 645. Residues 729 to 787 (APRRGEFCIAKFVDGEWYRARVEKVESPAKIHVFYIDYGNREVLPSTRLGTLSPAFSTR) enclose the Tudor domain. Threonine 779 carries the phosphothreonine modification. Serine 781, serine 785, and serine 909 each carry phosphoserine.

As to quaternary structure, forms a ternary complex with STAT6 and POLR2A. Associates with the RNA-induced silencing complex (RISC). Interacts with the RISC components AGO2, FMR1 and TNRC6A. Interacts with GTF2E1 and GTF2E2. Interacts with PIM1. Interacts with STAT5. Interacts with SYT11 (via C2 2 domain); the interaction with SYT11 is direct. (Microbial infection) Interacts with EAV NSP1. Binds to acidic transactivation domain of EBNA2. Interacts with SARS-CoV-2 NSP9. Post-translationally, phosphorylated by PIM1 in vitro. As to expression, ubiquitously expressed.

Its subcellular location is the cytoplasm. The protein localises to the nucleus. It localises to the melanosome. It catalyses the reaction Endonucleolytic cleavage to nucleoside 3'-phosphates and 3'-phosphooligonucleotide end-products.. Endonuclease that mediates miRNA decay of both protein-free and AGO2-loaded miRNAs. As part of its function in miRNA decay, regulates mRNAs involved in G1-to-S phase transition. Functions as a bridging factor between STAT6 and the basal transcription factor. Plays a role in PIM1 regulation of MYB activity. Functions as a transcriptional coactivator for STAT5. Functionally, (Microbial infection) Functions as a transcriptional coactivator for the Epstein-Barr virus nuclear antigen 2 (EBNA2). In terms of biological role, (Microbial infection) Promotes SARS-CoV-2 RNA synthesis by binding to negative-sense RNA and the viral protein nsp9. This is Staphylococcal nuclease domain-containing protein 1 (SND1) from Homo sapiens (Human).